The sequence spans 355 residues: Uroporphyrinogen decarboxylase (355 aa).

Substrate-binding positions include 27–31 (RQAGR), aspartate 77, tyrosine 154, threonine 209, and histidine 328.

Belongs to the uroporphyrinogen decarboxylase family. In terms of assembly, homodimer.

Its subcellular location is the cytoplasm. It carries out the reaction uroporphyrinogen III + 4 H(+) = coproporphyrinogen III + 4 CO2. Its pathway is porphyrin-containing compound metabolism; protoporphyrin-IX biosynthesis; coproporphyrinogen-III from 5-aminolevulinate: step 4/4. In terms of biological role, catalyzes the decarboxylation of four acetate groups of uroporphyrinogen-III to yield coproporphyrinogen-III. The sequence is that of Uroporphyrinogen decarboxylase from Aliivibrio fischeri (strain ATCC 700601 / ES114) (Vibrio fischeri).